A 427-amino-acid polypeptide reads, in one-letter code: Methylenetetrahydrofolate--tRNA-(uracil-5-)-methyltransferase TrmFO (427 aa).

6-11 (GAGLAG) lines the FAD pocket.

Belongs to the MnmG family. TrmFO subfamily. FAD is required as a cofactor.

It localises to the cytoplasm. It carries out the reaction uridine(54) in tRNA + (6R)-5,10-methylene-5,6,7,8-tetrahydrofolate + NADH + H(+) = 5-methyluridine(54) in tRNA + (6S)-5,6,7,8-tetrahydrofolate + NAD(+). It catalyses the reaction uridine(54) in tRNA + (6R)-5,10-methylene-5,6,7,8-tetrahydrofolate + NADPH + H(+) = 5-methyluridine(54) in tRNA + (6S)-5,6,7,8-tetrahydrofolate + NADP(+). Catalyzes the folate-dependent formation of 5-methyl-uridine at position 54 (M-5-U54) in all tRNAs. The chain is Methylenetetrahydrofolate--tRNA-(uracil-5-)-methyltransferase TrmFO from Acholeplasma laidlawii (strain PG-8A).